A 433-amino-acid chain; its full sequence is Phosphoribosylamine--glycine ligase (433 aa).

Residues 111-317 (EFMARNNIKG…FVDICEAIVD (207 aa)) enclose the ATP-grasp domain. An ATP-binding site is contributed by 138-194 (EDNPDVVVKPAGLTGGKGVKVMGEHMHTLEEAREYVKSVLEHDRVVIEERLKGEEVT). Mg(2+)-binding residues include Gln275, Glu287, and Asn289. Gln275, Glu287, and Asn289 together coordinate Mn(2+).

Belongs to the GARS family. Mg(2+) is required as a cofactor. The cofactor is Mn(2+).

It catalyses the reaction 5-phospho-beta-D-ribosylamine + glycine + ATP = N(1)-(5-phospho-beta-D-ribosyl)glycinamide + ADP + phosphate + H(+). Its pathway is purine metabolism; IMP biosynthesis via de novo pathway; N(1)-(5-phospho-D-ribosyl)glycinamide from 5-phospho-alpha-D-ribose 1-diphosphate: step 2/2. This chain is Phosphoribosylamine--glycine ligase, found in Methanocella arvoryzae (strain DSM 22066 / NBRC 105507 / MRE50).